The following is a 264-amino-acid chain: tRNA (guanine-N(1)-)-methyltransferase (264 aa).

S-adenosyl-L-methionine is bound by residues glycine 125 and 145–150; that span reads LGDFVL.

The protein belongs to the RNA methyltransferase TrmD family. As to quaternary structure, homodimer.

It is found in the cytoplasm. The enzyme catalyses guanosine(37) in tRNA + S-adenosyl-L-methionine = N(1)-methylguanosine(37) in tRNA + S-adenosyl-L-homocysteine + H(+). Specifically methylates guanosine-37 in various tRNAs. This chain is tRNA (guanine-N(1)-)-methyltransferase, found in Burkholderia multivorans (strain ATCC 17616 / 249).